The chain runs to 296 residues: L-isoleucine 3(1)-dioxygenase (296 aa).

Residues H176, D178, and H267 each contribute to the Fe cation site.

Belongs to the iron/ascorbate-dependent oxidoreductase family. L-ascorbate serves as cofactor. The cofactor is Fe(2+).

It carries out the reaction L-isoleucine + 2-oxoglutarate + O2 = 3(1)-hydroxy-L-isoleucine + succinate + CO2. In terms of biological role, catalyzes the hydroxylation of L-isoleucine at the C-4' position to form L-4'-hydroxyisoleucine (4'-HIL). Exhibits low activity with L-valine and L-methionine. This chain is L-isoleucine 3(1)-dioxygenase, found in Pantoea ananatis (strain AJ13355).